We begin with the raw amino-acid sequence, 344 residues long: Dihydroorotate dehydrogenase (quinone) (344 aa).

FMN contacts are provided by residues 64–68 and Thr-88; that span reads AGLDK. Residue Lys-68 participates in substrate binding. Position 113–117 (113–117) interacts with substrate; sequence NRMGF. 2 residues coordinate FMN: Asn-144 and Asn-177. Asn-177 is a binding site for substrate. Ser-180 acts as the Nucleophile in catalysis. Asn-182 is a substrate binding site. The FMN site is built by Lys-222 and Thr-250. 251–252 contributes to the substrate binding site; that stretch reads NT. FMN is bound by residues Gly-273, Gly-302, and 323-324; that span reads YS.

Belongs to the dihydroorotate dehydrogenase family. Type 2 subfamily. As to quaternary structure, monomer. FMN is required as a cofactor.

Its subcellular location is the cell membrane. The catalysed reaction is (S)-dihydroorotate + a quinone = orotate + a quinol. The protein operates within pyrimidine metabolism; UMP biosynthesis via de novo pathway; orotate from (S)-dihydroorotate (quinone route): step 1/1. Its function is as follows. Catalyzes the conversion of dihydroorotate to orotate with quinone as electron acceptor. In Polynucleobacter asymbioticus (strain DSM 18221 / CIP 109841 / QLW-P1DMWA-1) (Polynucleobacter necessarius subsp. asymbioticus), this protein is Dihydroorotate dehydrogenase (quinone).